Consider the following 520-residue polypeptide: MKTANHPDTVLIVDFGSQFTQLIARRIREAGVFSEIVPFQSAEAAFKRINPKAVILSGGPASTSDIGSPRAPQIVFDAGVPVLGICYGQMAMCVQMGGVAESSNHREFGRAFVEIEKDSPLFEGLWATGQRHQVWMSHGDRVIALPPGFQVFGKSESSPFAIFGNVERKMYGIMFHPEVVHTPDGARLLRNFVHNIAGIEGDWTMRAYREHAVEAIRKQVGKGKVICALSGGVDSSVAALLIHEAVGDQLTCILVDHGLMRKDEAAGVVAMFRQHYNLPLILVDASEKFISALEGEVDPEKKRKTIGRLFIEVFEEEAKKLGGADFLAQGTLYPDVIESVSFTGGPSVTIKSHHNVGGLPERMNMQLVEPLRELFKDEVRALGKELGLPESFIGRHPFPGPGLAIRCPGGITREKLEILREADAIYLDEIRKAGLYDAIWQAFAVLLPVQTVGVMGDGRTYEFVCALRAVTSVDGMTADFYHYDMAFLGAAATRIINEVRGINRVVYDVTSKPPGTIEWE.

The Glutamine amidotransferase type-1 domain maps to 9 to 202 (TVLIVDFGSQ…VHNIAGIEGD (194 aa)). The active-site Nucleophile is Cys-86. Residues His-176 and Glu-178 contribute to the active site. In terms of domain architecture, GMPS ATP-PPase spans 203–395 (WTMRAYREHA…LGLPESFIGR (193 aa)). 230–236 (SGGVDSS) contributes to the ATP binding site.

In terms of assembly, homodimer.

It carries out the reaction XMP + L-glutamine + ATP + H2O = GMP + L-glutamate + AMP + diphosphate + 2 H(+). It functions in the pathway purine metabolism; GMP biosynthesis; GMP from XMP (L-Gln route): step 1/1. Catalyzes the synthesis of GMP from XMP. The sequence is that of GMP synthase [glutamine-hydrolyzing] from Mesorhizobium japonicum (strain LMG 29417 / CECT 9101 / MAFF 303099) (Mesorhizobium loti (strain MAFF 303099)).